The chain runs to 358 residues: Acid phosphatase (358 aa).

An N-terminal signal peptide occupies residues 1 to 17 (MKFSTIALPLLASAALA). N-linked (GlcNAc...) asparagine glycosylation is found at Asn20, Asn27, and Asn32. Residues 21-41 (SSHSGTNATSHNSTVPNENSK) form a disordered region. The Mg(2+) site is built by Asp49, Asp50, and Ser81. Asn92 and Asn145 each carry an N-linked (GlcNAc...) asparagine glycan. Asn156 contributes to the Mg(2+) binding site. Residue Ser189 is part of the active site. N-linked (GlcNAc...) asparagine glycans are attached at residues Asn199 and Asn278.

The protein belongs to the SurE nucleotidase family. Mg(2+) serves as cofactor.

The protein resides in the secreted. It catalyses the reaction a phosphate monoester + H2O = an alcohol + phosphate. Functionally, probably serves to scavenge phosphorus for growing cells. The protein is Acid phosphatase (PHO2) of Yarrowia lipolytica (strain CLIB 122 / E 150) (Yeast).